The primary structure comprises 130 residues: Astrocytic phosphoprotein PEA-15 (130 aa).

The DED domain occupies 3-81 (EYGTLLQDLT…RPDLLTMVVD (79 aa)). Phosphoserine occurs at positions 61 and 90. The tract at residues 98-107 (KLTRIPSAKK) is microtubule-binding. Position 104 is a phosphoserine; by PKC (Ser104). Ser116 carries the phosphoserine; by CaMK2 modification. Residues 122–129 (KLAPPPKK) are microtubule-binding.

Binds RPS6KA3, MAPK3 and MAPK1. Interacts with CASP8 and FADD. Transient interaction with PLD1 and PLD2. Phosphorylated by protein kinase C and calcium-calmodulin-dependent protein kinase. These phosphorylation events are modulated by neurotransmitters or hormones. Predominantly expressed in the brain. Low levels in some peripheral organs.

The protein localises to the cytoplasm. Its function is as follows. Blocks Ras-mediated inhibition of integrin activation and modulates the ERK MAP kinase cascade. Inhibits RPS6KA3 activities by retaining it in the cytoplasm. Inhibits both TNFRSF6- and TNFRSF1A-mediated CASP8 activity and apoptosis. Regulates glucose transport by controlling both the content of SLC2A1 glucose transporters on the plasma membrane and the insulin-dependent trafficking of SLC2A4 from the cell interior to the surface. The protein is Astrocytic phosphoprotein PEA-15 (Pea15) of Mus musculus (Mouse).